The following is a 471-amino-acid chain: Steroid C26-monooxygenase (471 aa).

Residue Gly238 participates in substrate binding. Residue Cys412 participates in heme binding.

Belongs to the cytochrome P450 family. Heme serves as cofactor.

The catalysed reaction is cholest-4-en-3-one + 6 reduced [2Fe-2S]-[ferredoxin] + 3 O2 + 5 H(+) = (25S)-3-oxocholest-4-en-26-oate + 6 oxidized [2Fe-2S]-[ferredoxin] + 4 H2O. Its function is as follows. Involved in the utilization of cholesterol as the sole carbon and energy source by degrading the side chain. Primarily catalyzes the sequential oxidation of the terminal methyl of cholest-4-en-3-one into (25S)-26-hydroxycholest-4-en-3-one (alcohol), (25S)-26-oxocholest-4-en-3-one (aldehyde), to finally yield the carboxylic acid (25S)-3-oxocholest-4-en-26-oate. Also able to sequentially oxidize cholesterol itself, not only cholest-4-en-3-one. This Rhodococcus jostii (strain RHA1) protein is Steroid C26-monooxygenase (cyp125).